The following is a 591-amino-acid chain: Aspartate--tRNA(Asp/Asn) ligase (591 aa).

L-aspartate is bound at residue Glu-174. An aspartate region spans residues 198-201 (QLFK). Arg-220 lines the L-aspartate pocket. ATP contacts are provided by residues 220–222 (RDE) and Gln-229. Residue His-450 coordinates L-aspartate. Glu-483 serves as a coordination point for ATP. Arg-490 serves as a coordination point for L-aspartate. 535–538 (GLDR) is an ATP binding site.

The protein belongs to the class-II aminoacyl-tRNA synthetase family. Type 1 subfamily. In terms of assembly, homodimer.

It is found in the cytoplasm. The catalysed reaction is tRNA(Asx) + L-aspartate + ATP = L-aspartyl-tRNA(Asx) + AMP + diphosphate. In terms of biological role, aspartyl-tRNA synthetase with relaxed tRNA specificity since it is able to aspartylate not only its cognate tRNA(Asp) but also tRNA(Asn). Reaction proceeds in two steps: L-aspartate is first activated by ATP to form Asp-AMP and then transferred to the acceptor end of tRNA(Asp/Asn). The chain is Aspartate--tRNA(Asp/Asn) ligase from Pseudomonas fluorescens (strain SBW25).